Here is a 155-residue protein sequence, read N- to C-terminus: Ribosomal RNA large subunit methyltransferase H (155 aa).

Residues L72, G103, and 122–127 (LSALTL) each bind S-adenosyl-L-methionine.

Belongs to the RNA methyltransferase RlmH family. In terms of assembly, homodimer.

The protein resides in the cytoplasm. It catalyses the reaction pseudouridine(1915) in 23S rRNA + S-adenosyl-L-methionine = N(3)-methylpseudouridine(1915) in 23S rRNA + S-adenosyl-L-homocysteine + H(+). Functionally, specifically methylates the pseudouridine at position 1915 (m3Psi1915) in 23S rRNA. The chain is Ribosomal RNA large subunit methyltransferase H from Salmonella choleraesuis (strain SC-B67).